The following is a 321-amino-acid chain: MTSKLDQLREITTVVADTGDIEAVARLKPVDCTTNPSIVLKALGTPMFADAIKEAVAWGKKQGGNPDAVSSAVADRLAISVGAALVKLVPGRVSTEVDADLSFDTEASLAKARSIIAAYKDRGIDQDRILIKLASTWEGIRAAEVLQKEGIDCNLTLLFSKAQAIACADAKVFLISPFVGRILDWYKKSTGKDYTAEEDPGVISVREIYNYYKANDIKTIVMGASFRSAGEIEALAGCDRLTISPNLLDELAKDEGKLERKLSPEGRKPDPKVSVDEKTFRWMMNEDAMATEKLAEGIRAFAKDLGTLRTMVQKELQLAAA.

The Schiff-base intermediate with substrate role is filled by Lys132.

The protein belongs to the transaldolase family. Type 1 subfamily. As to quaternary structure, homodimer.

The protein resides in the cytoplasm. The catalysed reaction is D-sedoheptulose 7-phosphate + D-glyceraldehyde 3-phosphate = D-erythrose 4-phosphate + beta-D-fructose 6-phosphate. It functions in the pathway carbohydrate degradation; pentose phosphate pathway; D-glyceraldehyde 3-phosphate and beta-D-fructose 6-phosphate from D-ribose 5-phosphate and D-xylulose 5-phosphate (non-oxidative stage): step 2/3. In terms of biological role, transaldolase is important for the balance of metabolites in the pentose-phosphate pathway. The chain is Transaldolase from Rhizobium leguminosarum bv. trifolii (strain WSM2304).